We begin with the raw amino-acid sequence, 738 residues long: Putative cyclic nucleotide-gated ion channel 7 (738 aa).

Over 1–104 (MYKSQYISGQ…DKTLLVWNRL (104 aa)) the chain is Cytoplasmic. A helical membrane pass occupies residues 105–125 (FVISCILAVSVDPLFFYLPIV). Residues 126–139 (DNSGSSCIGIDTKL) lie on the Extracellular side of the membrane. The helical transmembrane segment at 140–160 (AVTTTTLRTIVDVFYLTRMAL) threads the bilayer. Over 161–193 (QFRTAYIAPSSRVFGRGELVIDPAKIAERYLTR) the chain is Cytoplasmic. Residues 194–214 (YFVVDFLAVLPLPQIAVWKFL) traverse the membrane as a helical segment. Topologically, residues 215–227 (HGSKGSDVLPTKT) are extracellular. Residues 228 to 248 (ALLNIVIVQYIPRFVRFIPLT) form a helical membrane-spanning segment. Residues 249–268 (SELKKTAGAFAEGAWAGAAY) lie on the Cytoplasmic side of the membrane. Residues 269-289 (YLLWYMLASHITGAFWYMLSV) form a helical membrane-spanning segment. Residues 290–395 (ERNDTCWRFA…GQGLQTSTFP (106 aa)) lie on the Extracellular side of the membrane. The helical transmembrane segment at 396 to 416 (GEVLFSIAIAIAGLLLFALLI) threads the bilayer. Residues 417-738 (GNMQTYLQSL…KPPEPDFDAE (322 aa)) lie on the Cytoplasmic side of the membrane. A nucleoside 3',5'-cyclic phosphate contacts are provided by residues 502–632 (LFAN…TFRF) and Glu573. The segment at 618-633 (FRRLHSRQVQQTFRFY) is calmodulin-binding. An IQ domain is found at 638 to 667 (RTWASCFIQAAWRRYSRRKNAELRRIEEKE). 2 disordered regions span residues 671–693 (GYED…SESS) and 715–738 (LRSS…FDAE).

Belongs to the cyclic nucleotide-gated cation channel (TC 1.A.1.5) family. As to quaternary structure, homotetramer or heterotetramer.

It localises to the cell membrane. Putative cyclic nucleotide-gated ion channel. This chain is Putative cyclic nucleotide-gated ion channel 7 (CNGC7), found in Arabidopsis thaliana (Mouse-ear cress).